Here is a 163-residue protein sequence, read N- to C-terminus: ATP synthase subunit b', chloroplastic (163 aa).

Residues 26–46 form a helical membrane-spanning segment; that stretch reads ATLPLMAVQILLFMVILNAVF.

It belongs to the ATPase B chain family. F-type ATPases have 2 components, F(1) - the catalytic core - and F(0) - the membrane proton channel. F(1) has five subunits: alpha(3), beta(3), gamma(1), delta(1), epsilon(1). F(0) has four main subunits: a(1), b(1), b'(1) and c(10-14). The alpha and beta chains form an alternating ring which encloses part of the gamma chain. F(1) is attached to F(0) by a central stalk formed by the gamma and epsilon chains, while a peripheral stalk is formed by the delta, b and b' chains.

The protein resides in the plastid. The protein localises to the chloroplast thylakoid membrane. Functionally, f(1)F(0) ATP synthase produces ATP from ADP in the presence of a proton or sodium gradient. F-type ATPases consist of two structural domains, F(1) containing the extramembraneous catalytic core and F(0) containing the membrane proton channel, linked together by a central stalk and a peripheral stalk. During catalysis, ATP synthesis in the catalytic domain of F(1) is coupled via a rotary mechanism of the central stalk subunits to proton translocation. Component of the F(0) channel, it forms part of the peripheral stalk, linking F(1) to F(0). The b'-subunit is a diverged and duplicated form of b found in plants and photosynthetic bacteria. This Guillardia theta (Cryptophyte) protein is ATP synthase subunit b', chloroplastic.